The following is a 398-amino-acid chain: Nicotinate phosphoribosyltransferase (398 aa).

Histidine 214 carries the phosphohistidine; by autocatalysis modification.

This sequence belongs to the NAPRTase family. Post-translationally, transiently phosphorylated on a His residue during the reaction cycle. Phosphorylation strongly increases the affinity for substrates and increases the rate of nicotinate D-ribonucleotide production. Dephosphorylation regenerates the low-affinity form of the enzyme, leading to product release.

The catalysed reaction is nicotinate + 5-phospho-alpha-D-ribose 1-diphosphate + ATP + H2O = nicotinate beta-D-ribonucleotide + ADP + phosphate + diphosphate. The protein operates within cofactor biosynthesis; NAD(+) biosynthesis; nicotinate D-ribonucleotide from nicotinate: step 1/1. In terms of biological role, catalyzes the synthesis of beta-nicotinate D-ribonucleotide from nicotinate and 5-phospho-D-ribose 1-phosphate at the expense of ATP. In Xanthomonas campestris pv. campestris (strain B100), this protein is Nicotinate phosphoribosyltransferase.